The chain runs to 252 residues: Undecaprenyl-diphosphatase (252 aa).

Transmembrane regions (helical) follow at residues 1–21, 42–62, 74–94, 95–115, 172–192, 206–226, and 232–252; these read MTTL…FLPI, HKAF…FLYF, ILIA…IIKS, LFNP…LILI, AAEF…FYDV, NLIV…KWLL, and HSFI…YLWY.

It belongs to the UppP family.

Its subcellular location is the cell inner membrane. The catalysed reaction is di-trans,octa-cis-undecaprenyl diphosphate + H2O = di-trans,octa-cis-undecaprenyl phosphate + phosphate + H(+). Its function is as follows. Catalyzes the dephosphorylation of undecaprenyl diphosphate (UPP). Confers resistance to bacitracin. The polypeptide is Undecaprenyl-diphosphatase (Sulfurihydrogenibium sp. (strain YO3AOP1)).